Reading from the N-terminus, the 52-residue chain is Histone H2A (52 aa).

The interval 1–25 (MSGRGKTGGKARAKAKTRSSRAGLQ) is disordered. N-acetylserine is present on S2. At S2 the chain carries Phosphoserine. N6-(2-hydroxyisobutyryl)lysine is present on K6. K6 is modified (N6-acetyllysine). Residues 7 to 19 (TGGKARAKAKTRS) show a composition bias toward basic residues. K10 is subject to N6-(2-hydroxyisobutyryl)lysine; alternate. Residue K10 is modified to N6-lactoyllysine; alternate. Position 10 is an N6-succinyllysine (K10). Residues K14 and K16 each participate in a glycyl lysine isopeptide (Lys-Gly) (interchain with G-Cter in ubiquitin) cross-link. K37 is subject to N6-(2-hydroxyisobutyryl)lysine; alternate.

As to quaternary structure, the nucleosome is a histone octamer containing two molecules each of H2A, H2B, H3 and H4 assembled in one H3-H4 heterotetramer and two H2A-H2B heterodimers. The octamer wraps approximately 147 bp of DNA. Post-translationally, acetylation is not necessary for the antibacterial activity. In terms of processing, monoubiquitination in C-terminus gives a specific tag for epigenetic transcriptional repression. Following DNA double-strand breaks (DSBs), it is ubiquitinated through 'Lys-63' linkage of ubiquitin moieties, leading to the recruitment of repair proteins to sites of DNA damage. H2AK119Ub and ionizing radiation-induced 'Lys-63'-linked ubiquitination are distinct events. Phosphorylation on Ser-2 is enhanced during mitosis. Phosphorylation on Ser-2 directly represses transcription.

The protein localises to the nucleus. The protein resides in the chromosome. It is found in the secreted. Functionally, core component of nucleosome. Nucleosomes wrap and compact DNA into chromatin, limiting DNA accessibility to the cellular machineries which require DNA as a template. Histones thereby play a central role in transcription regulation, DNA repair, DNA replication and chromosomal stability. DNA accessibility is regulated via a complex set of post-translational modifications of histones, also called histone code, and nucleosome remodeling. Hipposin shows strong antimicrobial activity against several Gram-positive and Gram-negative bacteria. The protein is Histone H2A of Hippoglossus hippoglossus (Atlantic halibut).